The primary structure comprises 85 residues: Arminin 2b (85 aa).

The N-terminal stretch at 1 to 18 is a signal peptide; that stretch reads MKTVFAILFLAFIALTYA. Residues 19–57 constitute a propeptide that is removed on maturation; it reads RSYEDVKEEIKNEIEKEILEDLEEESDELNDKSKEINDA. At Ala82 the chain carries Alanine amide.

It belongs to the arminin family. Expressed in entodermal epithelium along the body column.

It localises to the secreted. It is found in the target cell membrane. Functionally, antimicrobial peptide with a broad-spectrum antimicrobial activity. Keeps its antibacterial activity under a wide range of salt concentrations that mimic physiological conditions of human blood, which is surprising, since Hydra is an obligate freshwater animal with nearly no salt tolerance. Does not affect red blood cells. The chain is Arminin 2b from Hydra vulgaris (Hydra).